The sequence spans 148 residues: Snaclec 3 (148 aa).

Residues 1–23 (WGDSSSSASACWSCSSPLSGTEA) form the signal peptide. 3 disulfides stabilise this stretch: Cys-27-Cys-38, Cys-55-Cys-144, and Cys-121-Cys-136. The 112-residue stretch at 34-145 (YDQNCYKAFE…CSGTHSFVCK (112 aa)) folds into the C-type lectin domain.

This sequence belongs to the snaclec family. As to quaternary structure, heterodimer; disulfide-linked. As to expression, expressed by the venom gland.

It is found in the secreted. In terms of biological role, interferes with one step of hemostasis (modulation of platelet aggregation, or coagulation cascade, for example). The chain is Snaclec 3 from Echis carinatus sochureki (Saw-scaled viper).